The following is an 822-amino-acid chain: MPAPIRLRELIRTIRTARTQAEEREMIQKECAAIRSSFREEDNTYRCRNVAKLLYMHMLGYPAHFGQLECLKLIASQKFTDKRIGYLGAMLLLDERQDVHLLMTNCIKNDLNHSTQFVQGLALCTLGCMGSSEMCRDLAGEVEKLLKTSNSYLRKKAALCAVHVIRKVPELMEMFLPATKNLLNEKNHGVLHTSVVLLTEMCERSPDMLAHFRKLVPQLVRILKNLIMSGYSPEHDVSGISDPFLQVRILRLLRILGRNDDDSSEAMNDILAQVATNTETSKNVGNAILYETVLTIMDIKSESGLRVLAINILGRFLLNNDKNIRYVALTSLLKTVQTDHNAVQRHRSTIVDCLKDLDVSIKRRAMELSFALVNGNNIRGMMKELLYFLDSCEPEFKADCASGIFLAAEKYAPSKRWHIDTIMRVLTTAGSYVRDDAVPNLIQLITNSVEMHAYTVQRLYKAILGDYSQQPLVQVAAWCIGEYGDLLVSGQCEEEEPIQVTEDEVLDILESVLISNMSTSVTRGYALTAIMKLSTRFTCTVNRIKKVVSIYGSSIDVELQQRAVEYNALFKKYDHMRSALLERMPVMEKVTTNGPTEIVQTNGETEPAPLETKPPPSGPQPTSQANDLLDLLGGNDITPVIPTAPTSKPSSAGGELLDLLGDINLTGAPAAAPAPASVPQISQPPFLLDGLSSQPLFNDIAAGIPSITAYSKNGLKIEFTFERSNTNPSVTVITIQASNSTELDMTDFVFQAAVPKTFQLQLLSPSSSIVPAFNTGTITQVIKVLNPQKQQLRMRIKLTYNHKGSAMQDLAEVNNFPPQSWQ.

The tract at residues 597-628 (EIVQTNGETEPAPLETKPPPSGPQPTSQANDL) is disordered. A GAE domain is found at 702 to 817 (AGIPSITAYS…QDLAEVNNFP (116 aa)).

This sequence belongs to the adaptor complexes large subunit family. In terms of assembly, adaptor protein complex 1 (AP-1) is a heterotetramer composed of two large adaptins (gamma-type subunit AP1G1 and beta-type subunit AP1B1), a medium adaptin (mu-type subunit AP1M1 or AP1M2) and a small adaptin (sigma-type subunit AP1S1 or AP1S2 or AP1S3). Interacts (via GAE domain) with RABEP1. Interacts with SYNRG/gamma-synergin. Interacts with EPS15. Interacts (via GAE domain) with AP1AR (via coiled-coil domain). Interacts with CLN3 (via dileucine motif); this interaction facilitates lysosomal targeting. Interacts (via GAE domain) with AFTPH/aftiphilin; the interaction is required to recruit AFTPH/aftiphilin to the perinuclear region of the cell. Widely expressed.

The protein localises to the golgi apparatus. Its subcellular location is the cytoplasmic vesicle. It localises to the clathrin-coated vesicle membrane. The protein resides in the cytoplasm. It is found in the perinuclear region. The protein localises to the clathrin-coated vesicle. Its subcellular location is the membrane. It localises to the clathrin-coated pit. Its function is as follows. Subunit of clathrin-associated adaptor protein complex 1 that plays a role in protein sorting in the late-Golgi/trans-Golgi network (TGN) and/or endosomes. The AP complexes mediate both the recruitment of clathrin to membranes and the recognition of sorting signals within the cytosolic tails of transmembrane cargo molecules. In association with AFTPH/aftiphilin in the aftiphilin/p200/gamma-synergin complex, involved in the trafficking of transferrin from early to recycling endosomes, and the membrane trafficking of furin and the lysosomal enzyme cathepsin D between the trans-Golgi network (TGN) and endosomes. This chain is AP-1 complex subunit gamma-1 (AP1G1), found in Homo sapiens (Human).